A 631-amino-acid polypeptide reads, in one-letter code: tRNA uridine 5-carboxymethylaminomethyl modification enzyme MnmG (631 aa).

An FAD-binding site is contributed by 15–20 (GAGHAG). Residues 214-233 (YSKTEEEPGDKEPRHFSFTS) form a disordered region. Residue 276 to 290 (GPRYCPSIETKVVRF) coordinates NAD(+).

The protein belongs to the MnmG family. As to quaternary structure, homodimer. Heterotetramer of two MnmE and two MnmG subunits. It depends on FAD as a cofactor.

The protein resides in the cytoplasm. NAD-binding protein involved in the addition of a carboxymethylaminomethyl (cmnm) group at the wobble position (U34) of certain tRNAs, forming tRNA-cmnm(5)s(2)U34. This chain is tRNA uridine 5-carboxymethylaminomethyl modification enzyme MnmG, found in Lactobacillus delbrueckii subsp. bulgaricus (strain ATCC BAA-365 / Lb-18).